The sequence spans 793 residues: uncharacterized protein (793 aa).

Residues 1-22 (MKFKYGAIFFSGFLGLSAILAA) form the signal peptide. The N-palmitoyl cysteine moiety is linked to residue Cys-23. A lipid anchor (S-diacylglycerol cysteine) is attached at Cys-23. 3 disordered regions span residues 181-200 (LNQK…TLTV), 212-264 (KIED…DDQV), and 444-504 (KAPS…SNNN). Over residues 212 to 227 (KIEDSAKANGKSDEKG) the composition is skewed to basic and acidic residues. Over residues 237–246 (ATFSLVQLKQ) the composition is skewed to polar residues. Positions 247 to 264 (TQEKTDDSQDTKNSDDQV) are enriched in basic and acidic residues. A compositionally biased stretch (polar residues) spans 449 to 468 (NGENGQTNEGNSTNGEQNLL). The segment covering 472 to 485 (EVKDDSKPKEEVKS) has biased composition (basic and acidic residues). A compositionally biased stretch (low complexity) spans 491 to 504 (KESSQNQGKKSNNN).

It belongs to the MG185/MG260 family.

It is found in the cell membrane. This is an uncharacterized protein from Mycoplasma pneumoniae (strain ATCC 29342 / M129 / Subtype 1) (Mycoplasmoides pneumoniae).